The following is a 459-amino-acid chain: MRPALALCLLCPAFWPRPGNGEHPTADRAACSASGACYSLHHATFKRRAAEEACSLRGGTLSTVHSGSEFQAVLLLLRAGPGPGGGSKDLLFWVALERSISQCTQEKEPLRGFSWLHPDSEDSEDSPLPWVEEPQRSCTVRKCAALQATRGVEPAGWKEMRCHLRTDGYLCKYQFEVLCPAPRPGAASNLSFQAPFRLSSSALDFSPPGTEVSAMCPGDLSVSSTCIQEETSAHWDGLFPGTVLCPCSGRYLLAGKCVELPDCLDHLGDFTCECAVGFELGKDGRSCETKVEEQLTLEGTKLPTRNVTATPAGAVTNRTWPGQVYDKPGEMPQVTEILQWGTQSTLPTIQKTPQTKPKVTGTPSGSVVLNYTSSPPVSLTFDTSSTVVFILVSIAVIVLVVLTITVLGLFKLCFHKSRSSRTGKGALDSPGVECDAEATSLHHSSTQCTDIGVKSGTVA.

An N-terminal signal peptide occupies residues 1–21 (MRPALALCLLCPAFWPRPGNG). At 22 to 386 (EHPTADRAAC…VSLTFDTSST (365 aa)) the chain is on the extracellular side. In terms of domain architecture, C-type lectin spans 33–173 (ASGACYSLHH…LRTDGYLCKY (141 aa)). Cys143 and Cys162 are oxidised to a cystine. Asn189 carries an N-linked (GlcNAc...) asparagine glycan. The region spanning 246–288 (PCSGRYLLAGKCVELPDCLDHLGDFTCECAVGFELGKDGRSCE) is the EGF-like domain. Residues Asn306, Asn317, and Asn370 are each glycosylated (N-linked (GlcNAc...) asparagine). Residues 387 to 407 (VVFILVSIAVIVLVVLTITVL) traverse the membrane as a helical segment. Residues 408–459 (GLFKLCFHKSRSSRTGKGALDSPGVECDAEATSLHHSSTQCTDIGVKSGTVA) lie on the Cytoplasmic side of the membrane. Phosphoserine is present on Ser440.

The protein resides in the membrane. The sequence is that of C-type lectin domain family 14 member A (Clec14a) from Mus musculus (Mouse).